We begin with the raw amino-acid sequence, 30 residues long: Protein Tat (30 aa).

Residues Pro1–Trp30 are disordered. A Cell attachment site motif is present at residues Arg6–Asn8. Basic and acidic residues predominate over residues Lys13–Trp30.

This sequence belongs to the lentiviruses Tat family. As to quaternary structure, interacts with host CCNT1. Associates with the P-TEFb complex composed at least of Tat, P-TEFb (CDK9 and CCNT1), TAR RNA, RNA Pol II. Recruits the HATs CREBBP, TAF1/TFIID, EP300, PCAF and GCN5L2. Interacts with host KAT5/Tip60; this interaction targets the latter to degradation. Interacts with the host deacetylase SIRT1. Interacts with host capping enzyme RNGTT; this interaction stimulates RNGTT. Binds to host KDR, and to the host integrins ITGAV/ITGB3 and ITGA5/ITGB1. Interacts with host KPNB1/importin beta-1 without previous binding to KPNA1/importin alpha-1. Interacts with EIF2AK2. Interacts with host nucleosome assembly protein NAP1L1; this interaction may be required for the transport of Tat within the nucleus, since the two proteins interact at the nuclear rim. Interacts with host C1QBP/SF2P32; this interaction involves lysine-acetylated Tat. Interacts with the host chemokine receptors CCR2, CCR3 and CXCR4. Interacts with host DPP4/CD26; this interaction may trigger an anti-proliferative effect. Interacts with host LDLR. Interacts with the host extracellular matrix metalloproteinase MMP1. Interacts with host PRMT6; this interaction mediates Tat's methylation. Interacts with, and is ubiquitinated by MDM2/Hdm2. Interacts with host PSMC3 and HTATIP2. Interacts with STAB1; this interaction may overcome SATB1-mediated repression of IL2 and IL2RA (interleukin) in T cells by binding to the same domain than HDAC1. Interacts (when acetylated on Lys-50 and Lys-51) with human CDK13, thereby increasing HIV-1 mRNA splicing and promoting the production of the doubly spliced HIV-1 protein Nef. Acetylation by EP300, CREBBP, GCN5L2/GCN5 and PCAF regulates the transactivation activity of Tat. EP300-mediated acetylation of Lys-50 promotes dissociation of Tat from the TAR RNA through the competitive binding to PCAF's bromodomain. In addition, the non-acetylated Tat's N-terminus can also interact with PCAF. PCAF-mediated acetylation of Lys-28 enhances Tat's binding to CCNT1. Lys-50 is deacetylated by SIRT1. Post-translationally, phosphorylated by EIF2AK2 on serine and threonine residues adjacent to the basic region important for TAR RNA binding and function. Phosphorylation of Tat by EIF2AK2 is dependent on the prior activation of EIF2AK2 by dsRNA. In terms of processing, asymmetrical arginine methylation by host PRMT6 seems to diminish the transactivation capacity of Tat and affects the interaction with host CCNT1. Polyubiquitination by MDM2 does not target Tat to degradation, but activates its transactivation function and fosters interaction with CCNT1 and TAR RNA.

It localises to the host nucleus. Its subcellular location is the host nucleolus. The protein localises to the host cytoplasm. The protein resides in the secreted. Its function is as follows. Transcriptional activator that increases RNA Pol II processivity, thereby increasing the level of full-length viral transcripts. Recognizes a hairpin structure at the 5'-LTR of the nascent viral mRNAs referred to as the transactivation responsive RNA element (TAR) and recruits the cyclin T1-CDK9 complex (P-TEFb complex) that will in turn hyperphosphorylate the RNA polymerase II to allow efficient elongation. The CDK9 component of P-TEFb and other Tat-activated kinases hyperphosphorylate the C-terminus of RNA Pol II that becomes stabilized and much more processive. Other factors such as HTATSF1/Tat-SF1, SUPT5H/SPT5, and HTATIP2 are also important for Tat's function. Besides its effect on RNA Pol II processivity, Tat induces chromatin remodeling of proviral genes by recruiting the histone acetyltransferases (HATs) CREBBP, EP300 and PCAF to the chromatin. This also contributes to the increase in proviral transcription rate, especially when the provirus integrates in transcriptionally silent region of the host genome. To ensure maximal activation of the LTR, Tat mediates nuclear translocation of NF-kappa-B by interacting with host RELA. Through its interaction with host TBP, Tat may also modulate transcription initiation. Tat can reactivate a latently infected cell by penetrating in it and transactivating its LTR promoter. In the cytoplasm, Tat is thought to act as a translational activator of HIV-1 mRNAs. In terms of biological role, extracellular circulating Tat can be endocytosed by surrounding uninfected cells via the binding to several surface receptors such as CD26, CXCR4, heparan sulfate proteoglycans (HSPG) or LDLR. Neurons are rarely infected, but they internalize Tat via their LDLR. Endosomal low pH allows Tat to cross the endosome membrane to enter the cytosol and eventually further translocate into the nucleus, thereby inducing severe cell dysfunctions ranging from cell activation to cell death. Through its interaction with nuclear HATs, Tat is potentially able to control the acetylation-dependent cellular gene expression. Tat seems to inhibit the HAT activity of KAT5/Tip60 and TAF1, and consequently modify the expression of specific cellular genes. Modulates the expression of many cellular genes involved in cell survival, proliferation or in coding for cytokines (such as IL10) or cytokine receptors. May be involved in the derepression of host interleukin IL2 expression. Mediates the activation of cyclin-dependent kinases and dysregulation of microtubule network. Tat plays a role in T-cell and neurons apoptosis. Tat induced neurotoxicity and apoptosis probably contribute to neuroAIDS. Host extracellular matrix metalloproteinase MMP1 cleaves Tat and decreases Tat's mediated neurotoxicity. Circulating Tat also acts as a chemokine-like and/or growth factor-like molecule that binds to specific receptors on the surface of the cells, affecting many cellular pathways. In the vascular system, Tat binds to ITGAV/ITGB3 and ITGA5/ITGB1 integrins dimers at the surface of endothelial cells and competes with bFGF for heparin-binding sites, leading to an excess of soluble bFGF. Binds to KDR/VEGFR-2. All these Tat-mediated effects enhance angiogenesis in Kaposi's sarcoma lesions. The polypeptide is Protein Tat (Human immunodeficiency virus type 1 group M subtype A (isolate Z321) (HIV-1)).